We begin with the raw amino-acid sequence, 1803 residues long: 6-methylsalicylic acid synthase (1803 aa).

The interval 1–40 (MEVHGDEVLSVDSGVSTPPSTGSGFRRPLETPGTEIGNLN) is disordered. A compositionally biased stretch (low complexity) spans 13–24 (SGVSTPPSTGSG). In terms of domain architecture, Ketosynthase family 3 (KS3) spans 44–470 (QNEVAVVGMA…GTVSHAIIEE (427 aa)). Active-site for beta-ketoacyl synthase activity residues include cysteine 216, histidine 351, and histidine 391. Residues 581 to 894 (VWVFSGHGAQ…SIAQLHCRGA (314 aa)) enclose the Malonyl-CoA:ACP transacylase (MAT) domain. Residue serine 667 is the For malonyltransferase activity of the active site. The tract at residues 940 to 1058 (HTLLGQRVPV…GQWEAGGSKN (119 aa)) is N-terminal hotdog fold. The region spanning 940–1218 (HTLLGQRVPV…FSEIEGTPGS (279 aa)) is the PKS/mFAS DH domain. Histidine 972 acts as the Proton acceptor; for thioesterase activity in catalysis. The C-terminal hotdog fold stretch occupies residues 1073–1218 (ANNKLADNFS…FSEIEGTPGS (146 aa)). The active-site Proton donor; for thioesterase activity is the aspartate 1129. Residues 1141-1262 (TSVGSTLFFD…KNVADLYCGS (122 aa)) are required for homotetramer formation. Residues 1434–1628 (STYLITGGLG…AVAVQWTSWR (195 aa)) form the Ketoreductase (KR) domain. The span at 1701-1710 (ASSADAPSAA) shows a compositional bias: low complexity. The tract at residues 1701–1721 (ASSADAPSAAPKETNEMPESI) is disordered. One can recognise a Carrier domain in the interval 1726 to 1801 (TWLDERIRDC…HLVGWFLEKM (76 aa)). Serine 1761 carries the O-(pantetheine 4'-phosphoryl)serine modification. Residues 1783 to 1803 (LTWSCPTVSHLVGWFLEKMGN) are required for catalytic activity.

As to quaternary structure, homotetramer.

It carries out the reaction 3 malonyl-CoA + acetyl-CoA + NADPH + 3 H(+) = 6-methylsalicylate + 3 CO2 + NADP(+) + 4 CoA + H2O. The protein operates within secondary metabolite biosynthesis. In terms of biological role, 6-methylsalicylic acid synthase; part of the gene cluster that mediates the biosynthesis of terreic acid, a quinone epoxide inhibitor of Bruton's tyrosine kinase. The first step of the pathway is the synthesis of 6-methylsalicylic acid (6-MSA) by the 6-methylsalicylic acid synthase atX. In the biosynthesis of 6-MSA, atX utilizes one acetyl-CoA and three malonyl-CoAs as its substrates and catalyzes a series of programmed reactions including Claisen condensation, reduction, aldol cyclization, and the hydrolytic cleavage that yields 6-MSA. The 6-methylsalicylate 1-monooxygenase atA then catalyzes the decarboxylative hydroxylation of 6-MSA to 3-methylcatechol. The next step is the conversion of 3-methylcatechol to 3-methyl-1,2,4-benzenetriol by cytochrome P450 monooxygenase atE, which is enhanced by cytochrome P450 monooxygenase atG. Then, the epoxidase atD catalyzes the epoxidation and hydroxyl oxidation of 3-methyl-1,2,4-benzenetriol to terremutin. Lastly, GMC oxidoreductase atC oxidizes terremutin to terreic acid. The polypeptide is 6-methylsalicylic acid synthase (Aspergillus terreus (strain NIH 2624 / FGSC A1156)).